A 1493-amino-acid chain; its full sequence is Pleckstrin homology domain-containing family H member 2 (1493 aa).

Residues 20–175 adopt a coiled-coil conformation; the sequence is LESQLMKFRV…LQEVQGKKSS (156 aa). Disordered regions lie at residues 202-230, 245-335, 363-439, and 613-705; these read SPPQVVKSEEMSKISSKEPEFTEGKDMEE, NNRG…SSSI, LNSP…LPPP, and SSSP…EPLE. Residues 208 to 230 show a composition bias toward basic and acidic residues; the sequence is KSEEMSKISSKEPEFTEGKDMEE. 2 stretches are compositionally biased toward polar residues: residues 245–260 and 267–281; these read NNRGQRTLHQTPCGSE and TSFATDGGISQNSGA. A compositionally biased stretch (basic and acidic residues) spans 374-388; it reads LSKKEQDSSSDELNK. Composition is skewed to polar residues over residues 389–409, 421–432, and 676–698; these read KFQSQRLDYSSSSSEANTPSP, NSLSGKGTQLVP, and STDTEYSQPEQKLPKTCSSSSDN. 2 consecutive PH domains span residues 703-797 and 811-919; these read PLEK…NVLR and KPTM…VAAG. Residues 955 to 1110 form the MyTH4 domain; sequence HSKEGIISPL…PSRMEILSTL (156 aa). One can recognise an FERM domain in the interval 1121 to 1451; the sequence is FSIPVHFMNG…SYINNFHQQK (331 aa). The tract at residues 1474–1493 is disordered; the sequence is MMGSQPLLSSSRPTKGPTLL.

As to quaternary structure, self-associates. Interacts with TGFB1I1. As to expression, kidney. Reduced expression in patients with focal segmental glomerulosclerosis.

Its subcellular location is the cytoplasm. The protein resides in the cytoskeleton. It is found in the cell membrane. The protein localises to the cell projection. It localises to the lamellipodium. In terms of biological role, in the kidney glomerulus may play a role in linking podocyte foot processes to the glomerular basement membrane. May be involved in stabilization of F-actin by attenuating its depolymerization. Can recruit TGFB1I1 from focal adhesions to podocyte lamellipodia. In Homo sapiens (Human), this protein is Pleckstrin homology domain-containing family H member 2 (PLEKHH2).